A 166-amino-acid polypeptide reads, in one-letter code: uncharacterized protein (166 aa).

The GIY-YIG domain occupies 2–82 (DNWVCYLIMS…KRLSKKRNIQ (81 aa)). A disordered region spans residues 23 to 43 (NNRQRRLNDHNNLNPSRKGAK).

This is an uncharacterized protein from Acanthamoeba polyphaga mimivirus (APMV).